Reading from the N-terminus, the 126-residue chain is Calcitonin receptor-stimulating peptide 1 (126 aa).

The signal sequence occupies residues 1–25; the sequence is MGFWKFPPFLVLSILVLYQAGMFHT. A propeptide spanning residues 26–78 is cleaved from the precursor; that stretch reads APMRSAFGSPFDPATLSEEESRLLLAAMVNDYEQMKAREMQKQRAQGSGISVQ. Cysteines 82 and 87 form a disulfide. Gly-118 carries the post-translational modification Glycine amide. A propeptide spanning residues 123–126 is cleaved from the precursor; that stretch reads NFWI.

As to expression, mainly expressed in the thyroid gland and CNS. Found in the nerve cells of cerebrum, hippocampus, hypothalamus, pons/midbrain and thalamus.

The protein localises to the secreted. In terms of biological role, stimulates cAMP production in porcine kidney cell line LLC-PK1 via the calcitonin receptor (CT) but not via the CT-like (CL) receptor. The sequence is that of Calcitonin receptor-stimulating peptide 1 (CRSP1) from Sus scrofa (Pig).